A 270-amino-acid chain; its full sequence is Ribonuclease HII (270 aa).

The RNase H type-2 domain maps to 84 to 270; it reads RYIAGVDEVG…HRNSFLTKLL (187 aa). 3 residues coordinate a divalent metal cation: aspartate 90, glutamate 91, and aspartate 186.

This sequence belongs to the RNase HII family. Mn(2+) serves as cofactor. Mg(2+) is required as a cofactor.

The protein localises to the cytoplasm. The enzyme catalyses Endonucleolytic cleavage to 5'-phosphomonoester.. Its function is as follows. Endonuclease that specifically degrades the RNA of RNA-DNA hybrids. In Clostridium beijerinckii (strain ATCC 51743 / NCIMB 8052) (Clostridium acetobutylicum), this protein is Ribonuclease HII.